The sequence spans 281 residues: Bis(5'-nucleosyl)-tetraphosphatase, symmetrical (281 aa).

The protein belongs to the Ap4A hydrolase family.

It catalyses the reaction P(1),P(4)-bis(5'-adenosyl) tetraphosphate + H2O = 2 ADP + 2 H(+). Functionally, hydrolyzes diadenosine 5',5'''-P1,P4-tetraphosphate to yield ADP. In Acidovorax sp. (strain JS42), this protein is Bis(5'-nucleosyl)-tetraphosphatase, symmetrical.